Here is a 616-residue protein sequence, read N- to C-terminus: Angiotensin-converting enzyme (616 aa).

The signal sequence occupies residues 1–23; it reads MNLINFSYLNLLFGAGLFSVLES. The Peptidase M2 domain maps to 27 to 610; it reads LNTESDAKKW…PRAENWMGGK (584 aa). Residues asparagine 61 and asparagine 96 are each glycosylated (N-linked (GlcNAc...) asparagine). An intrachain disulfide couples cysteine 142 to cysteine 152. 2 residues coordinate chloride: arginine 180 and tyrosine 218. A glycan (N-linked (GlcNAc...) asparagine) is linked at asparagine 303. Cysteine 345 and cysteine 363 are joined by a disulfide. A Zn(2+)-binding site is contributed by histidine 376. Catalysis depends on glutamate 377, which acts as the Proton acceptor. 2 residues coordinate Zn(2+): histidine 380 and glutamate 404. The N-linked (GlcNAc...) asparagine glycan is linked to asparagine 428. Residues tryptophan 478 and arginine 482 each contribute to the chloride site. The active-site Proton donor is histidine 506. Arginine 515 is a binding site for chloride. Residues cysteine 531 and cysteine 543 are joined by a disulfide bond. Residues asparagine 535 and asparagine 573 are each glycosylated (N-linked (GlcNAc...) asparagine).

It belongs to the peptidase M2 family. It depends on Zn(2+) as a cofactor. Requires chloride as cofactor. As to expression, epithelial cells of the midgut.

The protein resides in the secreted. It is found in the extracellular space. It catalyses the reaction Release of a C-terminal dipeptide, oligopeptide-|-Xaa-Yaa, when Xaa is not Pro, and Yaa is neither Asp nor Glu. Thus, conversion of angiotensin I to angiotensin II, with increase in vasoconstrictor activity, but no action on angiotensin II.. Its activity is regulated as follows. Activated by chloride. Inhibited by captopril and lisinopril, and to a lesser extent by delaprilat. This chain is Angiotensin-converting enzyme (ACE), found in Theromyzon tessulatum (Duck leech).